Reading from the N-terminus, the 364-residue chain is Aminomethyltransferase (364 aa).

It belongs to the GcvT family. In terms of assembly, the glycine cleavage system is composed of four proteins: P, T, L and H.

It catalyses the reaction N(6)-[(R)-S(8)-aminomethyldihydrolipoyl]-L-lysyl-[protein] + (6S)-5,6,7,8-tetrahydrofolate = N(6)-[(R)-dihydrolipoyl]-L-lysyl-[protein] + (6R)-5,10-methylene-5,6,7,8-tetrahydrofolate + NH4(+). Functionally, the glycine cleavage system catalyzes the degradation of glycine. This Escherichia coli O6:H1 (strain CFT073 / ATCC 700928 / UPEC) protein is Aminomethyltransferase.